Reading from the N-terminus, the 556-residue chain is 2-succinyl-5-enolpyruvyl-6-hydroxy-3-cyclohexene-1-carboxylate synthase (556 aa).

This sequence belongs to the TPP enzyme family. MenD subfamily. Homodimer. Mg(2+) is required as a cofactor. Requires Mn(2+) as cofactor. Thiamine diphosphate serves as cofactor.

The enzyme catalyses isochorismate + 2-oxoglutarate + H(+) = 5-enolpyruvoyl-6-hydroxy-2-succinyl-cyclohex-3-ene-1-carboxylate + CO2. It participates in quinol/quinone metabolism; 1,4-dihydroxy-2-naphthoate biosynthesis; 1,4-dihydroxy-2-naphthoate from chorismate: step 2/7. The protein operates within quinol/quinone metabolism; menaquinone biosynthesis. Functionally, catalyzes the thiamine diphosphate-dependent decarboxylation of 2-oxoglutarate and the subsequent addition of the resulting succinic semialdehyde-thiamine pyrophosphate anion to isochorismate to yield 2-succinyl-5-enolpyruvyl-6-hydroxy-3-cyclohexene-1-carboxylate (SEPHCHC). This Escherichia coli (strain UTI89 / UPEC) protein is 2-succinyl-5-enolpyruvyl-6-hydroxy-3-cyclohexene-1-carboxylate synthase.